The chain runs to 733 residues: DNA-binding protein SATB2 (733 aa).

Residues 1–47 form a disordered region; sequence MERRSESPCLRDSPDRRSGSPDVKGPPPVKVARLEQNGSPMGARGRP. S20 is subject to Phosphoserine. Residues K24 and K30 each participate in a glycyl lysine isopeptide (Lys-Gly) (interchain with G-Cter in SUMO2) cross-link. The residue at position 39 (S39) is a Phosphoserine. One can recognise a CMP domain in the interval 57-158; sequence GLMIPVFCVV…VVTLKIQLQS (102 aa). K161 participates in a covalent cross-link: Glycyl lysine isopeptide (Lys-Gly) (interchain with G-Cter in SUMO2). Positions 161–234 constitute a CUTL domain; it reads KLEDLPAEQW…WYKKYKKIKV (74 aa). A Glycyl lysine isopeptide (Lys-Gly) (interchain with G-Cter in SUMO) cross-link involves residue K233. K350 is covalently cross-linked (Glycyl lysine isopeptide (Lys-Gly) (interchain with G-Cter in SUMO); alternate). K350 is covalently cross-linked (Glycyl lysine isopeptide (Lys-Gly) (interchain with G-Cter in SUMO2); alternate). A DNA-binding region (CUT 1) is located at residues 350 to 437; sequence KPEPTNSSVE…ERDRIYQDER (88 aa). A disordered region spans residues 435 to 473; that stretch reads DERERSMNPNVSMVSSASSSPSSSRTPQAKTSTPTTDLP. Over residues 441–458 the composition is skewed to low complexity; that stretch reads MNPNVSMVSSASSSPSSS. The residue at position 454 (S454) is a Phosphoserine. Residues 459–470 show a composition bias toward polar residues; it reads RTPQAKTSTPTT. T467 is subject to Phosphothreonine. The segment at residues 473–560 is a DNA-binding region (CUT 2); it reads PIKVDGANIN…ERDVIYEEES (88 aa). A Glycyl lysine isopeptide (Lys-Gly) (interchain with G-Cter in SUMO2) cross-link involves residue K475. Residues 580–593 show a composition bias toward low complexity; sequence QVLHRQQSQPAKES. 2 disordered regions span residues 580–617 and 694–733; these read QVLH…KPRS and LLTE…IDQR. S594 bears the Phosphoserine mark. Positions 615–674 form a DNA-binding region, homeobox; that stretch reads PRSRTKISLEALGILQSFIHDVGLYPDQEAIHTLSAQLDLPKHTIIKFFQNQRYHVKHHG. Residues 694–708 show a composition bias toward acidic residues; the sequence is LLTESEENDSEEGSE. The segment covering 709–733 has biased composition (basic and acidic residues); that stretch reads EMYKVEAEEENADKSKAAPAEIDQR. K724 participates in a covalent cross-link: Glycyl lysine isopeptide (Lys-Gly) (interchain with G-Cter in SUMO2).

Belongs to the CUT homeobox family. Interacts with ATF4 and RUNX2; resulting in enhanced DNA binding and transactivation by these transcription factors. Interacts with PIAS1. In terms of processing, sumoylated by PIAS1. Sumoylation promotes nuclear localization, but represses transcription factor activity. In terms of tissue distribution, high expression in adult brain, moderate expression in fetal brain, and weak expression in adult liver, kidney, and spinal cord and in select brain regions, including amygdala, corpus callosum, caudate nucleus, and hippocampus.

The protein resides in the nucleus matrix. In terms of biological role, binds to DNA, at nuclear matrix- or scaffold-associated regions. Thought to recognize the sugar-phosphate structure of double-stranded DNA. Transcription factor controlling nuclear gene expression, by binding to matrix attachment regions (MARs) of DNA and inducing a local chromatin-loop remodeling. Acts as a docking site for several chromatin remodeling enzymes and also by recruiting corepressors (HDACs) or coactivators (HATs) directly to promoters and enhancers. Required for the initiation of the upper-layer neurons (UL1) specific genetic program and for the inactivation of deep-layer neurons (DL) and UL2 specific genes, probably by modulating BCL11B expression. Repressor of Ctip2 and regulatory determinant of corticocortical connections in the developing cerebral cortex. May play an important role in palate formation. Acts as a molecular node in a transcriptional network regulating skeletal development and osteoblast differentiation. This is DNA-binding protein SATB2 (SATB2) from Homo sapiens (Human).